Reading from the N-terminus, the 223-residue chain is Small ribosomal subunit protein uS3 (223 aa).

The 69-residue stretch at 39–107 (IRQFLRKKPS…EVWLEIAEIK (69 aa)) folds into the KH type-2 domain.

The protein belongs to the universal ribosomal protein uS3 family. In terms of assembly, part of the 30S ribosomal subunit. Forms a tight complex with proteins S10 and S14.

Binds the lower part of the 30S subunit head. Binds mRNA in the 70S ribosome, positioning it for translation. This Chlamydia pneumoniae (Chlamydophila pneumoniae) protein is Small ribosomal subunit protein uS3.